The sequence spans 372 residues: Chorismate synthase (372 aa).

Arginine 48 contacts NADP(+). Residues 125–127, glycine 285, 300–304, and arginine 327 each bind FMN; these read RSS and KPTPS.

It belongs to the chorismate synthase family. The cofactor is FMNH2.

The catalysed reaction is 5-O-(1-carboxyvinyl)-3-phosphoshikimate = chorismate + phosphate. It functions in the pathway metabolic intermediate biosynthesis; chorismate biosynthesis; chorismate from D-erythrose 4-phosphate and phosphoenolpyruvate: step 7/7. Its function is as follows. Catalyzes the anti-1,4-elimination of the C-3 phosphate and the C-6 proR hydrogen from 5-enolpyruvylshikimate-3-phosphate (EPSP) to yield chorismate, which is the branch point compound that serves as the starting substrate for the three terminal pathways of aromatic amino acid biosynthesis. This reaction introduces a second double bond into the aromatic ring system. The sequence is that of Chorismate synthase from Methanocella arvoryzae (strain DSM 22066 / NBRC 105507 / MRE50).